Here is a 301-residue protein sequence, read N- to C-terminus: Multifunctional dioxygenase prhA (301 aa).

Fe cation contacts are provided by His130, Asp132, and His214.

The protein belongs to the PhyH family. Homodimer. Fe cation serves as cofactor.

It carries out the reaction preaustinoid A1 + 2-oxoglutarate + O2 = berkeleyone B + succinate + CO2 + H2O. The enzyme catalyses berkeleyone B + 2-oxoglutarate + O2 = berkeleydione + succinate + CO2 + H2O. The catalysed reaction is preaustinoid A + 2 2-oxoglutarate + 2 O2 = berkeleytrione + 2 succinate + 2 CO2 + H2O. It participates in secondary metabolite biosynthesis; terpenoid biosynthesis. Multifunctional dioxygenase; part of the gene cluster that mediates the biosynthesis of paraherquonin, a meroterpenoid with a unique, highly congested hexacyclic molecular architecture. The first step of the pathway is the synthesis of 3,5-dimethylorsellinic acid (DMOA) by the polyketide synthase prhL. Synthesis of DMOA is followed by farnesylation by the prenyltransferase prhE, methylesterification by the methyl-transferase prhM, epoxidation of the prenyl chain by the flavin-dependent monooxygenase prhF, and cyclization of the farnesyl moiety by the terpene cyclase prhH, to yield the tetracyclic intermediate, protoaustinoid A. The short chain dehydrogenase prhI then oxidizes the C-3 alcohol group of the terpene cyclase product to transform protoaustinoid A into protoaustinoid B. The FAD-binding monooxygenase prhJ catalyzes the oxidation of protoaustinoid B into preaustinoid A which is further oxidized into preaustinoid A1 by FAD-binding monooxygenase phrK. Finally, prhA leads to berkeleydione via the berkeleyone B intermediate. PrhA is a multifunctional dioxygenase that first desaturates at C5-C6 to form berkeleyone B, followed by rearrangement of the A/B-ring to form the cycloheptadiene moiety in berkeleydione. Berkeleydione serves as the key intermediate for the biosynthesis of paraherquonin as well as many other meroterpenoids. The cytochrome P450 monooxygenases prhB, prhD, and prhN, as well as the isomerase prhC, are probably involved in the late stage of paraherquonin biosynthesis, after the production of berkeleydione. Especially prhC might be a multifunctional enzyme that catalyzes the D-ring expansion via intramolecular methoxy rearrangement, as well as the hydrolysis of the expanded D-ring. The sequence is that of Multifunctional dioxygenase prhA from Penicillium brasilianum.